A 767-amino-acid polypeptide reads, in one-letter code: MSKRRKLPARQPACLETFSPDVLNDVSELFAKSFSYRKPLDNEWQLPAPTESFSCGHLEFRALLDLKNSLNEVKNLLSDKKLDEWHRHTAFTNKAGKIISHVKKAVNAELCTQAWCKFQEILCSFPLIPQEAFQSGRLNSLHLCEAPGAFIASLNHYLKSHRFPCEWSWVANSLNPYHEANDNLRMITDDRLMANTLHCWYFGPDNTGDIMTLKYLTGLQDFLSGMSPIHLVTADGSFDCQGNPGEQEALVSSLHYCEAVTALITLGDGGSFVLKMFTLFEHCSVNLMYLLNCSFDQVHVFKPATSKAGNSEVYVVCLRYKGREAVQPLLSRMVLNFGTEMTRKALFPHHVIPKSFLERHEECCTFFHRYQLETISENIRLFESMGTGEQERLNNLRDCAVQYFMQKFQLKPLSRNHWLVKKSNIGCSMNTKWFGQRNKYFKTYNERKMMETLSWKDKVAKGYFNSWAEEHTVYHPGQNSLLEGTASSLEYQSWQVLEGKKLPKVKCSPFCDGEILKTLNEAIEKSLGEALSVDAKVSSKQQYRCCPVFSEESVLSELLRLTKCLPDEQGAEPSGPVKCLLVGSPAVCDLQMPAPLEIQLVESVELTAFSCSLLHDGDPAYQHLFLDCLLHSLRRLHRGDVMVLPILSCFTRFMAGLTFVLHGCFRFITFSCPTSLEPLRTCAVLLCIGYQNLPDAVFQFLQNVHDLLSKLLHPSAPRQILQFLPMEALLQGTLLDFLWDLNAAIAKRHLHLIIQGERDQAIGSLEL.

Positions 109–322 (ELCTQAWCKF…VYVVCLRYKG (214 aa)) constitute an Adrift-type SAM-dependent 2'-O-MTase domain. Lysine 117 is an active-site residue. Positions 148, 167, and 235 each coordinate S-adenosyl-L-methionine. Aspartate 235 is a catalytic residue. Lysine 275 (proton acceptor) is an active-site residue.

The protein resides in the nucleus. It localises to the cytoplasm. The catalysed reaction is a 5'-end (N(7)-methyl 5'-triphosphoguanosine)-(2'-O-methyl-ribonucleoside)-(ribonucleotide) in mRNA + S-adenosyl-L-methionine = a 5'-end (N(7)-methyl 5'-triphosphoguanosine)-(2'-O-methyl-ribonucleoside)-(2'-O-methyl-ribonucleotide) in mRNA + S-adenosyl-L-homocysteine + H(+). Its function is as follows. S-adenosyl-L-methionine-dependent methyltransferase that mediates mRNA cap2 2'-O-ribose methylation to the 5'-cap structure of mRNAs. Methylates the ribose of the second nucleotide of a m(7)GpppG-capped mRNA and small nuclear RNA (snRNA) (cap0) to produce m(7)GpppRmpNm (cap2). Recognizes a guanosine cap on RNA independently of its N(7) methylation status. Display cap2 methylation on both cap0 and cap1. Displays a preference for cap1 RNAs. This Mus musculus (Mouse) protein is Cap-specific mRNA (nucleoside-2'-O-)-methyltransferase 2 (Cmtr2).